A 469-amino-acid polypeptide reads, in one-letter code: 3-isopropylmalate dehydratase large subunit (469 aa).

Residues Cys347, Cys407, and Cys410 each contribute to the [4Fe-4S] cluster site.

This sequence belongs to the aconitase/IPM isomerase family. LeuC type 1 subfamily. As to quaternary structure, heterodimer of LeuC and LeuD. Requires [4Fe-4S] cluster as cofactor.

It carries out the reaction (2R,3S)-3-isopropylmalate = (2S)-2-isopropylmalate. Its pathway is amino-acid biosynthesis; L-leucine biosynthesis; L-leucine from 3-methyl-2-oxobutanoate: step 2/4. In terms of biological role, catalyzes the isomerization between 2-isopropylmalate and 3-isopropylmalate, via the formation of 2-isopropylmaleate. The polypeptide is 3-isopropylmalate dehydratase large subunit (Synechococcus sp. (strain RCC307)).